The primary structure comprises 304 residues: Non-specific ribonucleoside hydrolase RihC (304 aa).

His-233 is an active-site residue.

This sequence belongs to the IUNH family. RihC subfamily.

Hydrolyzes both purine and pyrimidine ribonucleosides with a broad-substrate specificity. The protein is Non-specific ribonucleoside hydrolase RihC of Escherichia coli (strain SE11).